A 274-amino-acid chain; its full sequence is 4-diphosphocytidyl-2-C-methyl-D-erythritol kinase (274 aa).

Residue K8 is part of the active site. 92–102 (PSGAGLGGGSS) provides a ligand contact to ATP. D134 is an active-site residue.

Belongs to the GHMP kinase family. IspE subfamily.

The catalysed reaction is 4-CDP-2-C-methyl-D-erythritol + ATP = 4-CDP-2-C-methyl-D-erythritol 2-phosphate + ADP + H(+). Its pathway is isoprenoid biosynthesis; isopentenyl diphosphate biosynthesis via DXP pathway; isopentenyl diphosphate from 1-deoxy-D-xylulose 5-phosphate: step 3/6. Functionally, catalyzes the phosphorylation of the position 2 hydroxy group of 4-diphosphocytidyl-2C-methyl-D-erythritol. The sequence is that of 4-diphosphocytidyl-2-C-methyl-D-erythritol kinase from Porphyromonas gingivalis (strain ATCC 33277 / DSM 20709 / CIP 103683 / JCM 12257 / NCTC 11834 / 2561).